The primary structure comprises 715 residues: Fatty acid oxidation complex subunit alpha (715 aa).

The enoyl-CoA hydratase/isomerase stretch occupies residues 1–190; it reads MIYQGKAITV…KVGAVDAVVA (190 aa). Asp297 contributes to the substrate binding site. Positions 312–715 are 3-hydroxyacyl-CoA dehydrogenase; sequence HDAKQAAVLG…MAKNGQRFFN (404 aa). Residues Met325, Asp344, 401 to 403, Lys408, and Ser430 each bind NAD(+); that span reads VVE. The For 3-hydroxyacyl-CoA dehydrogenase activity role is filled by His451. Position 454 (Asn454) interacts with NAD(+). Residues Asn501 and Tyr660 each coordinate substrate.

This sequence in the N-terminal section; belongs to the enoyl-CoA hydratase/isomerase family. The protein in the C-terminal section; belongs to the 3-hydroxyacyl-CoA dehydrogenase family. As to quaternary structure, heterotetramer of two alpha chains (FadB) and two beta chains (FadA).

It catalyses the reaction a (3S)-3-hydroxyacyl-CoA + NAD(+) = a 3-oxoacyl-CoA + NADH + H(+). The enzyme catalyses a (3S)-3-hydroxyacyl-CoA = a (2E)-enoyl-CoA + H2O. It carries out the reaction a 4-saturated-(3S)-3-hydroxyacyl-CoA = a (3E)-enoyl-CoA + H2O. The catalysed reaction is (3S)-3-hydroxybutanoyl-CoA = (3R)-3-hydroxybutanoyl-CoA. It catalyses the reaction a (3Z)-enoyl-CoA = a 4-saturated (2E)-enoyl-CoA. The enzyme catalyses a (3E)-enoyl-CoA = a 4-saturated (2E)-enoyl-CoA. It functions in the pathway lipid metabolism; fatty acid beta-oxidation. Its function is as follows. Involved in the aerobic and anaerobic degradation of long-chain fatty acids via beta-oxidation cycle. Catalyzes the formation of 3-oxoacyl-CoA from enoyl-CoA via L-3-hydroxyacyl-CoA. It can also use D-3-hydroxyacyl-CoA and cis-3-enoyl-CoA as substrate. This chain is Fatty acid oxidation complex subunit alpha, found in Ectopseudomonas oleovorans (Pseudomonas oleovorans).